The primary structure comprises 91 residues: Em-like protein (91 aa).

2 stretches are compositionally biased toward basic and acidic residues: residues 1–18 (MEQQQDRRELDAKAREGE) and 31–51 (DAQERLAEGRSRGGQTRKEQI). The segment at 1–91 (MEQQQDRREL…PIDESKYRHP (91 aa)) is disordered. Gly residues predominate over residues 62-73 (KGGLSSAGGPGG). Basic and acidic residues predominate over residues 75-91 (RASEEGRPIDESKYRHP).

It belongs to the small hydrophilic plant seed protein family.

The polypeptide is Em-like protein (Picea glauca (White spruce)).